Consider the following 470-residue polypeptide: GTPase Der (470 aa).

EngA-type G domains lie at 2 to 165 and 201 to 372; these read KTIA…GLEA and IRVG…ENFS. GTP is bound by residues 8-15, 55-59, 117-120, 207-214, 254-258, and 318-321; these read GKPNVGKS, DTGGI, NKID, GKVNVGKS, DTAGI, and NKWD. Residues 373–457 form the KH-like domain; that stretch reads RRIPTSILNK…PILIRARKRG (85 aa).

It belongs to the TRAFAC class TrmE-Era-EngA-EngB-Septin-like GTPase superfamily. EngA (Der) GTPase family. In terms of assembly, associates with the 50S ribosomal subunit.

In terms of biological role, GTPase that plays an essential role in the late steps of ribosome biogenesis. The sequence is that of GTPase Der from Wolinella succinogenes (strain ATCC 29543 / DSM 1740 / CCUG 13145 / JCM 31913 / LMG 7466 / NCTC 11488 / FDC 602W) (Vibrio succinogenes).